The following is a 76-amino-acid chain: Small proline-rich protein 4 (76 aa).

The tract at residues 38-76 (PKTKDPCVPQAKKQCPARSTTNPAQEKCPAQQDPKCKQK) is disordered.

This sequence belongs to the cornifin (SPRR) family. Post-translationally, cross-linked to membrane proteins by transglutaminase.

It localises to the cytoplasm. The protein resides in the cell cortex. Functionally, cross-linked envelope protein of keratinocytes. Involved in UV-induced cornification. The chain is Small proline-rich protein 4 (Sprr4) from Mus musculus (Mouse).